The sequence spans 480 residues: UDP-N-acetylmuramate--L-alanine ligase (480 aa).

An ATP-binding site is contributed by 127-133 (GTHGKTT).

This sequence belongs to the MurCDEF family.

It is found in the cytoplasm. The catalysed reaction is UDP-N-acetyl-alpha-D-muramate + L-alanine + ATP = UDP-N-acetyl-alpha-D-muramoyl-L-alanine + ADP + phosphate + H(+). It functions in the pathway cell wall biogenesis; peptidoglycan biosynthesis. Its function is as follows. Cell wall formation. This is UDP-N-acetylmuramate--L-alanine ligase from Blochmanniella floridana.